The sequence spans 278 residues: UPF0750 membrane protein YxkD (278 aa).

5 consecutive transmembrane segments (helical) span residues 8–28, 46–66, 77–97, 101–121, and 145–165; these read VLMLVIGAFFFALAVNLFAIP, LFQWSPGVTNFILNAFLLLIG, YTIIAVAANSLFLHLTHGWSI, ELIINTIFAGVFAGVGIGMII, and ISYALLFFDLIVVFSSYFIIG.

This sequence belongs to the UPF0750 family.

It is found in the cell membrane. The chain is UPF0750 membrane protein YxkD (yxkD) from Bacillus subtilis (strain 168).